Reading from the N-terminus, the 565-residue chain is Adenine deaminase (565 aa).

It belongs to the metallo-dependent hydrolases superfamily. Adenine deaminase family. The cofactor is Mn(2+).

The enzyme catalyses adenine + H2O + H(+) = hypoxanthine + NH4(+). The chain is Adenine deaminase from Cereibacter sphaeroides (strain KD131 / KCTC 12085) (Rhodobacter sphaeroides).